The sequence spans 523 residues: Lysine--tRNA ligase (523 aa).

The 'HIGH' region motif lies at 30–38 (PSGYVHVGN). Residues D95, C99, H100, H106, C177, H180, C199, and H203 each contribute to the Zn(2+) site. A 'KMSKS' region motif is present at residues 279–283 (KMSGS).

It belongs to the class-I aminoacyl-tRNA synthetase family. Requires Zn(2+) as cofactor.

It is found in the cytoplasm. It carries out the reaction tRNA(Lys) + L-lysine + ATP = L-lysyl-tRNA(Lys) + AMP + diphosphate. This Pyrococcus furiosus (strain ATCC 43587 / DSM 3638 / JCM 8422 / Vc1) protein is Lysine--tRNA ligase (lysS).